Reading from the N-terminus, the 300-residue chain is Estradiol 17-beta-dehydrogenase 11 (300 aa).

A signal peptide spans 1–19 (MKFLLDILLLLPLLIVCSL). Residue 40-64 (LITGAGHGIGRLTAYEFAKLKSKLV) participates in NADP(+) binding. S172 provides a ligand contact to substrate. Y185 acts as the Proton acceptor in catalysis.

It belongs to the short-chain dehydrogenases/reductases (SDR) family. 17-beta-HSD 3 subfamily. As to expression, present at high level in steroidogenic cells such as syncytiotrophoblasts, sebaceous gland, Leydig cells, and granulosa cells of the dominant follicle and corpus luteum. In lung, it is detected in the ciliated epithelium and in acini of adult trachea, in bronchioles, but not in alveoli. In the eye, it is detected in the nonpigmented epithelium of the ciliary body and, at lower level, in the inner nuclear layer of the retina (at protein level). Widely expressed. Highly expressed in retina, pancreas, kidney, liver, lung, adrenal, small intestine, ovary and heart.

The protein localises to the endoplasmic reticulum. The protein resides in the lipid droplet. The catalysed reaction is 17beta-estradiol + NAD(+) = estrone + NADH + H(+). The enzyme catalyses 17beta-estradiol + NADP(+) = estrone + NADPH + H(+). In terms of biological role, can convert androstan-3-alpha,17-beta-diol (3-alpha-diol) to androsterone in vitro, suggesting that it may participate in androgen metabolism during steroidogenesis. May act by metabolizing compounds that stimulate steroid synthesis and/or by generating metabolites that inhibit it. Has no activity toward DHEA (dehydroepiandrosterone), or A-dione (4-androste-3,17-dione), and only a slight activity toward testosterone to A-dione. Tumor-associated antigen in cutaneous T-cell lymphoma. The protein is Estradiol 17-beta-dehydrogenase 11 (HSD17B11) of Homo sapiens (Human).